We begin with the raw amino-acid sequence, 1067 residues long: Protein CLEC16A homolog (1067 aa).

The 150-residue stretch at Leu-50–Tyr-199 folds into the FPL domain. Residues Ser-333–Val-353 form a helical membrane-spanning segment. A compositionally biased stretch (low complexity) spans Ser-409–Asp-418. 4 disordered regions span residues Ser-409–Gln-434, Ala-837–Ser-861, Ser-876–His-993, and Gln-1037–Val-1067. Positions Val-421–Asp-432 are enriched in polar residues. The segment covering Ser-876–Pro-888 has biased composition (polar residues). Positions Arg-917–Ser-926 are enriched in basic and acidic residues. Low complexity predominate over residues Pro-927 to Ser-947. Basic and acidic residues predominate over residues Arg-951–His-974. The segment covering Ser-975–His-993 has biased composition (polar residues). The segment covering Glu-1057 to Val-1067 has biased composition (basic and acidic residues).

The protein belongs to the CLEC16A/gop-1 family. As to quaternary structure, interacts with the class C Vps-HOPS complex components; Car, Dor and Vps16a.

Its subcellular location is the cytoplasmic vesicle. It localises to the autophagosome membrane. The protein localises to the late endosome membrane. It is found in the golgi apparatus membrane. Functionally, required for mitophagy, autophagy and endosome maturation, possibly by acting in multiple membrane trafficking pathways. Required for endosome trafficking and maturation. Functions with the class C Vps-HOPS complex member Vps16a to promote endosomal maturation into degradative late endosomes and lysosomes. In response to starvation, functions at an early stage of autophagy to promote autophagosome growth and efficient autophagy. Essential for the recruitment of lva-positive Golgi elements to autophagosomes. Likely to function by promoting membrane traffic from the Golgi complex to the developing autophagosomes. Also regulates synaptic growth at the neuromuscular junctions (NMJ) by down-regulating BMP signaling. The sequence is that of Protein CLEC16A homolog from Drosophila melanogaster (Fruit fly).